Here is a 219-residue protein sequence, read N- to C-terminus: Transmembrane protein 125 (219 aa).

A run of 4 helical transmembrane segments spans residues 36–56 (LCFAVAVGLVAGCGAGGVALL), 68–88 (LAVGTALCLLALLVLVKQLMS), 114–134 (ALVVLLSGLVLLVTGLTLAGL), and 147–167 (MLSVGITLAASGALLLLGLLL).

It is found in the membrane. The chain is Transmembrane protein 125 (TMEM125) from Bos taurus (Bovine).